A 335-amino-acid chain; its full sequence is Anthranilate phosphoribosyltransferase (335 aa).

5-phospho-alpha-D-ribose 1-diphosphate-binding positions include G80, 83 to 84 (GD), T88, 90 to 93 (NIST), 108 to 116 (KHGNRAVSS), and S120. G80 contributes to the anthranilate binding site. S92 lines the Mg(2+) pocket. Anthranilate is bound at residue N111. R166 serves as a coordination point for anthranilate. Residues D225 and E226 each contribute to the Mg(2+) site.

The protein belongs to the anthranilate phosphoribosyltransferase family. Homodimer. It depends on Mg(2+) as a cofactor.

It carries out the reaction N-(5-phospho-beta-D-ribosyl)anthranilate + diphosphate = 5-phospho-alpha-D-ribose 1-diphosphate + anthranilate. It functions in the pathway amino-acid biosynthesis; L-tryptophan biosynthesis; L-tryptophan from chorismate: step 2/5. Functionally, catalyzes the transfer of the phosphoribosyl group of 5-phosphorylribose-1-pyrophosphate (PRPP) to anthranilate to yield N-(5'-phosphoribosyl)-anthranilate (PRA). The polypeptide is Anthranilate phosphoribosyltransferase (Clostridium kluyveri (strain NBRC 12016)).